A 1025-amino-acid polypeptide reads, in one-letter code: MMQPTPAPSSAPGSPQRTQAEPEMETPSYPQPPQNVGTAPFSVLVKLFEKLATERKQERRRKLLDAWFRHWRREKGFDLYPVLRLLLPQKDRDRAVYGLKEKNLAKTYIKLIPLGMRDPDAIRLLNWKKPTERDKSSGDFPQVLCEVVSKRSSVIEGTLTIDELNEILDDIAKNMGKSDVQSKILRRIYNNSTADEQRWIIRIILKDMNISVKETTVFAVFHPDAQDLYNTCSDLKKVAWELWDPSRRLNAKDKEIQIFHAFAPMLCKRPTRKIEETVKAMGGSKFIIEEKLDGERMQLHKRGNEYFYCSRKGKDYTYLYGKHIGAGSLTPFIDSAFDSRIDDIILDGEMLVWDPVSERNLPFGTLKTAALDRSKKENNPRPCFKVFDLLYLNGMSLLDKTVKFRKNNLRHCIKPIPGRIEFVEEYQGETANDIRKRMEQVMENRGEGLVIKHPKAKYILNGRNTDWIKVKPEYMDNMGETVDVLVVAGNYGSGKRGGGVSTLICAVMDDRRPDSDDEPKYSSFVRIGTGLSFADYVWVRSKPWKVWDPKNPPEFLQTAKKGQEDKGDVYLEPEDSFILKVKAAEITPSDQYHMGFTMRFPRALAIRDDLSIADCMTATEVFESLKSERKRKMEDDAGITTKKRKTTVKKVALLPEYSGPNLKKVAVKTDIFNGMKFVVFSDPKSRTGEADKKELMKTIHANGGTCSQIVNKNSEAIVIYGGSITPYDLKLVIDKGIHDVIKPSWITDSVTLGEPAPFKKKYFFHATEERKYADEYNEDDGEEEGAVPSADEQERDVKSGTVEPGSETEDEDEEQAPEIKEEQDGELHEWLKVDDRKSPALPAHDEEDSVTEDDSDNADVADEEEPDLDDWFQVKGETEDEGAGALATASRHRETTPDVDGDVKMGESEEAMDYDPDVIFKHLCFYLDSPANAQRHGMATRPKYEAAITKSFEEVEKLIKDNGGKIVDLDEPKLTHVVLDKRDDSRRVELMKRTSKPRRRHLVLSDYIEACIDEGTLLDEEGESF.

The segment at 1–36 (MMQPTPAPSSAPGSPQRTQAEPEMETPSYPQPPQNV) is disordered. 10 residues coordinate ATP: Glu-289, Lys-291, Leu-292, Arg-296, Glu-349, Phe-387, Glu-447, Lys-452, Lys-469, and Lys-471. The active-site N6-AMP-lysine intermediate is the Lys-291. Glu-349 contacts Mg(2+). Glu-447 is a Mg(2+) binding site. The BRCT 1 domain occupies 667-763 (VKTDIFNGMK…EPAPFKKKYF (97 aa)). Positions 773-904 (ADEYNEDDGE…TTPDVDGDVK (132 aa)) are disordered. Composition is skewed to acidic residues over residues 775–785 (EYNEDDGEEEG) and 806–816 (SETEDEDEEQA). Basic and acidic residues predominate over residues 817–838 (PEIKEEQDGELHEWLKVDDRKS). Residues 845 to 870 (DEEDSVTEDDSDNADVADEEEPDLDD) are compositionally biased toward acidic residues. Basic and acidic residues predominate over residues 891–904 (RHRETTPDVDGDVK). A BRCT 2 domain is found at 915-1025 (DPDVIFKHLC…TLLDEEGESF (111 aa)).

The protein belongs to the ATP-dependent DNA ligase family. Mg(2+) is required as a cofactor.

The protein resides in the nucleus. It carries out the reaction ATP + (deoxyribonucleotide)n-3'-hydroxyl + 5'-phospho-(deoxyribonucleotide)m = (deoxyribonucleotide)n+m + AMP + diphosphate.. In terms of biological role, DNA ligase involved in DNA non-homologous end joining (NHEJ); required for double-strand break (DSB) repair. The chain is DNA ligase 4 (LIG4) from Coprinopsis cinerea (strain Okayama-7 / 130 / ATCC MYA-4618 / FGSC 9003) (Inky cap fungus).